The sequence spans 455 residues: Nucleolar protein 12 (455 aa).

Disordered stretches follow at residues 1–104 and 117–142; these read MSSF…ENEN and QNEE…RTKA. A compositionally biased stretch (basic and acidic residues) spans 24–37; it reads NTRDGPVSKDELVK. A compositionally biased stretch (polar residues) spans 51–66; that stretch reads PKQQTNENESTLNQSA. Positions 68–91 are enriched in acidic residues; sequence ESDEEEEEYNDESNEGDDSDDAEQ. Residues 124–141 are compositionally biased toward basic and acidic residues; sequence SKESSEAKSSKVAEERTK. 2 consecutive RRM domains span residues 160–258 and 266–351; these read RTVF…HVSH and RTIF…RAKS. Disordered regions lie at residues 333 to 402 and 420 to 455; these read LETG…RSTV and AIKG…MNKV. Basic residues predominate over residues 339–348; the sequence is KKGRKLRISR. Residues 349–363 show a composition bias toward polar residues; sequence AKSNAKPSLMSPNHF. Over residues 425–438 the composition is skewed to basic residues; sequence KGSKKGKKVKKPRI. The span at 439–455 shows a compositional bias: basic and acidic residues; it reads RERSTKFKEERKTMNKV.

It belongs to the RRM RBM34 family.

The protein localises to the nucleus. It localises to the nucleolus. Involved in pre-25S rRNA processing. This Candida albicans (strain SC5314 / ATCC MYA-2876) (Yeast) protein is Nucleolar protein 12 (NOP12).